We begin with the raw amino-acid sequence, 226 residues long: 7-carboxy-7-deazaguanine synthase (226 aa).

Substrate is bound by residues 10-12 (LQG) and R25. The region spanning 16–221 (YTGIPCIFVR…LQTHKFIWTP (206 aa)) is the Radical SAM core domain. Positions 29, 33, and 36 each coordinate [4Fe-4S] cluster. A Mg(2+)-binding site is contributed by S38. Position 69 (T69) interacts with substrate. G71 lines the S-adenosyl-L-methionine pocket.

The protein belongs to the radical SAM superfamily. 7-carboxy-7-deazaguanine synthase family. In terms of assembly, homodimer. [4Fe-4S] cluster serves as cofactor. The cofactor is S-adenosyl-L-methionine. Mg(2+) is required as a cofactor.

It catalyses the reaction 6-carboxy-5,6,7,8-tetrahydropterin + H(+) = 7-carboxy-7-deazaguanine + NH4(+). It functions in the pathway purine metabolism; 7-cyano-7-deazaguanine biosynthesis. Its function is as follows. Catalyzes the complex heterocyclic radical-mediated conversion of 6-carboxy-5,6,7,8-tetrahydropterin (CPH4) to 7-carboxy-7-deazaguanine (CDG), a step common to the biosynthetic pathways of all 7-deazapurine-containing compounds. The protein is 7-carboxy-7-deazaguanine synthase of Koribacter versatilis (strain Ellin345).